The chain runs to 504 residues: Glutamate--tRNA ligase (504 aa).

A 'HIGH' region motif is present at residues 25–35 (PSPTGNPHVGL). Residues cysteine 122, cysteine 124, cysteine 149, and glutamate 151 each coordinate Zn(2+). A 'KMSKS' region motif is present at residues 270–274 (KLSKR). Position 273 (lysine 273) interacts with ATP.

The protein belongs to the class-I aminoacyl-tRNA synthetase family. Glutamate--tRNA ligase type 1 subfamily. Monomer. It depends on Zn(2+) as a cofactor.

The protein resides in the cytoplasm. The catalysed reaction is tRNA(Glu) + L-glutamate + ATP = L-glutamyl-tRNA(Glu) + AMP + diphosphate. Catalyzes the attachment of glutamate to tRNA(Glu) in a two-step reaction: glutamate is first activated by ATP to form Glu-AMP and then transferred to the acceptor end of tRNA(Glu). The polypeptide is Glutamate--tRNA ligase (Streptomyces avermitilis (strain ATCC 31267 / DSM 46492 / JCM 5070 / NBRC 14893 / NCIMB 12804 / NRRL 8165 / MA-4680)).